We begin with the raw amino-acid sequence, 296 residues long: Small ribosomal subunit biogenesis GTPase RsgA (296 aa).

In terms of domain architecture, CP-type G spans 63-224 (RNQLVRPPVA…IADTPGFSSY (162 aa)). Residues 112-115 (SKTD) and 167-175 (GQTGAGKST) each bind GTP. The Zn(2+) site is built by C248, C253, H255, and C261.

Belongs to the TRAFAC class YlqF/YawG GTPase family. RsgA subfamily. In terms of assembly, monomer. Associates with 30S ribosomal subunit, binds 16S rRNA. Zn(2+) is required as a cofactor.

Its subcellular location is the cytoplasm. Its function is as follows. One of several proteins that assist in the late maturation steps of the functional core of the 30S ribosomal subunit. Helps release RbfA from mature subunits. May play a role in the assembly of ribosomal proteins into the subunit. Circularly permuted GTPase that catalyzes slow GTP hydrolysis, GTPase activity is stimulated by the 30S ribosomal subunit. The sequence is that of Small ribosomal subunit biogenesis GTPase RsgA from Limosilactobacillus reuteri (strain DSM 20016) (Lactobacillus reuteri).